Here is a 139-residue protein sequence, read N- to C-terminus: Large ribosomal subunit protein bL17 (139 aa).

The protein belongs to the bacterial ribosomal protein bL17 family. In terms of assembly, part of the 50S ribosomal subunit. Contacts protein L32.

The protein is Large ribosomal subunit protein bL17 of Sphingopyxis alaskensis (strain DSM 13593 / LMG 18877 / RB2256) (Sphingomonas alaskensis).